Here is a 98-residue protein sequence, read N- to C-terminus: MTSINLNLMTAFLLALAGVLMYRSHLMSTLLCLEGMMLSLYIMLSLLISHFHMFSLSMAPLILLVISACEAAGGLALLVKMSNNYGNDYVQNLNLLQC.

3 helical membrane-spanning segments follow: residues 1–21 (MTSINLNLMTAFLLALAGVLM), 28–48 (STLLCLEGMMLSLYIMLSLLI), and 59–79 (APLILLVISACEAAGGLALLV).

This sequence belongs to the complex I subunit 4L family. In terms of assembly, core subunit of respiratory chain NADH dehydrogenase (Complex I) which is composed of 45 different subunits.

It localises to the mitochondrion inner membrane. The enzyme catalyses a ubiquinone + NADH + 5 H(+)(in) = a ubiquinol + NAD(+) + 4 H(+)(out). Core subunit of the mitochondrial membrane respiratory chain NADH dehydrogenase (Complex I) which catalyzes electron transfer from NADH through the respiratory chain, using ubiquinone as an electron acceptor. Part of the enzyme membrane arm which is embedded in the lipid bilayer and involved in proton translocation. The protein is NADH-ubiquinone oxidoreductase chain 4L (MT-ND4L) of Phascolarctos cinereus (Koala).